The sequence spans 450 residues: UDP-N-acetylmuramoylalanine--D-glutamate ligase (450 aa).

119-125 contacts ATP; sequence GSNGKTT.

This sequence belongs to the MurCDEF family.

It is found in the cytoplasm. The enzyme catalyses UDP-N-acetyl-alpha-D-muramoyl-L-alanine + D-glutamate + ATP = UDP-N-acetyl-alpha-D-muramoyl-L-alanyl-D-glutamate + ADP + phosphate + H(+). It functions in the pathway cell wall biogenesis; peptidoglycan biosynthesis. In terms of biological role, cell wall formation. Catalyzes the addition of glutamate to the nucleotide precursor UDP-N-acetylmuramoyl-L-alanine (UMA). In Streptococcus thermophilus (strain ATCC BAA-491 / LMD-9), this protein is UDP-N-acetylmuramoylalanine--D-glutamate ligase.